A 1732-amino-acid polypeptide reads, in one-letter code: Polycystin-1-like protein 3 (1732 aa).

The first 23 residues, 1–23, serve as a signal peptide directing secretion; the sequence is MFFKGGSWLWLYIRTSIILGSEL. The Extracellular segment spans residues 24 to 697; the sequence is NSPAPHGQNN…IKLFLRVTNN (674 aa). Residues 30–138 enclose the C-type lectin domain; the sequence is GQNNCYQLNR…CLLKYYFICQ (109 aa). Intrachain disulfides connect Cys51/Cys137 and Cys112/Cys129. N-linked (GlcNAc...) asparagine glycans are attached at residues Asn286, Asn363, Asn515, Asn537, and Asn575. Residues 523–685 enclose the GAIN-B domain; the sequence is TSLNMSTHQL…FVVPRTVNVE (163 aa). 2 disulfide bridges follow: Cys635-Cys663 and Cys650-Cys665. The tract at residues 635–685 is GPS; sequence CYYWEIHNQTWSSAGCQVGPQSTILRTQCLCNHLTFFASDFFVVPRTVNVE. Residues 698 to 718 form a helical membrane-spanning segment; the sequence is PVGVSLLASLLGFYVITVVWA. Over 719–905 the chain is Cytoplasmic; sequence RKKDQADMQK…PWNQFTRVQR (187 aa). A PLAT domain is found at 743–860; sequence FHYLIQVYTG…GDCELDRVFI (118 aa). The helical transmembrane segment at 906-926 threads the bilayer; sequence LSCCMTLLLCNMVINVMFWKI. At 927 to 939 the chain is on the extracellular side; the sequence is NSTTAKRDEQMRP. A helical membrane pass occupies residues 940 to 960; that stretch reads FAVAWSELLVSIHTAVILFPI. Residues 961–1154 lie on the Cytoplasmic side of the membrane; that stretch reads NLVIGRLFPL…ISNGLSKWLT (194 aa). The chain crosses the membrane as a helical span at residues 1155-1175; that stretch reads SVCWLLLGFTSLASAFFTALY. The Extracellular portion of the chain corresponds to 1176 to 1198; that stretch reads SLELSKDQATSWMISIILSVLQN. Residues 1199-1219 traverse the membrane as a helical segment; the sequence is IFISQPVKVVFFTFLYSLMMS. Topologically, residues 1220-1289 are cytoplasmic; the sequence is RMPRLNKENE…KLTGDILVQI (70 aa). The helical transmembrane segment at 1290–1300 threads the bilayer; that stretch reads LFLTLLMTAIY. Residues 1301–1461 lie on the Extracellular side of the membrane; sequence SAKNSNRFYL…SFTSLQMSKK (161 aa). Residues 1462-1491 traverse the membrane as a helical segment; that stretch reads GCVWSIISQVIYYLLVCYYAFIQGCQLKQQ. Residues 1492–1500 are Cytoplasmic-facing; that stretch reads KWRFFTGKR. The helical transmembrane segment at 1501–1519 threads the bilayer; sequence NILDTSIILISFILLGLDM. Topologically, residues 1520–1550 are extracellular; the sequence is KSISLHKKNMARYRDDQDRFISFYEAVKVNS. Residues 1551 to 1572 form a helical membrane-spanning segment; the sequence is AATHLVGFPVLLATVQLWNLLR. Residues 1573 to 1589 are Cytoplasmic-facing; sequence HSPRLRVISRTLSRAWD. The chain crosses the membrane as a helical span at residues 1590 to 1614; that stretch reads EVVGFLLIILILLTGYAIAFNLLFG. Residues 1613–1651 form a channel pore-region region; sequence FGCSISDYRTFFSSAVTVVGLLMGISHQEEVFALDPVLG. Over 1615–1647 the chain is Extracellular; it reads CSISDYRTFFSSAVTVVGLLMGISHQEEVFALD. Residues 1648–1667 form a helical membrane-spanning segment; the sequence is PVLGTFLILTSVILMVLVVI. Residues 1668–1732 are Cytoplasmic-facing; sequence NLFVSAILMA…SDTEVLDELP (65 aa).

This sequence belongs to the polycystin family. In terms of assembly, heterotetramer with PKD2L1, composed of 3 subunit of PKD2L1 and 1 subunit of PKD1L3. Post-translationally, autoproteolytically processed at the GPS region of the GAIN-B domain; this cleavage modulates receptor activity. As to expression, highly expressed in placenta, weakly in heart and lung.

Its subcellular location is the cell membrane. It carries out the reaction Ca(2+)(in) = Ca(2+)(out). The catalysed reaction is Na(+)(in) = Na(+)(out). The enzyme catalyses K(+)(in) = K(+)(out). It catalyses the reaction Mg(2+)(in) = Mg(2+)(out). Its activity is regulated as follows. The non-selective cation channel is gated following an off-response property by acid: gated open after the removal of acid stimulus, but not during acid application. Regulation of non-selective cation channel activity by external Ca(2+) is bimodal, first sensitizing and subsequently inactivating the current. In terms of biological role, pore-forming subunit of a heterotetrameric, non-selective cation channel that is permeable to Ca(2+). Also shows permeability towards NA(1+), K(+) and Mg(2+). Heterotetrameric complex channel is activated by external low pH and Ca(2+), but opens only when the extracellular pH rises again and after the removal of acid stimulus. May act as a sour taste receptor in gustatory cells; however, its contribution to sour taste perception is unclear in vivo and may be indirect. The chain is Polycystin-1-like protein 3 from Homo sapiens (Human).